Consider the following 475-residue polypeptide: U3 small nucleolar RNA-interacting protein 2 (475 aa).

Residues 1–75 are disordered; it reads MSATAAARKR…EEEEELEETA (75 aa). The Nuclear localization signal signature appears at 8 to 40; sequence RKRGKPASGAGAGAGAGKRRRKADSAGDRGKSK. Arginine 10 carries the post-translational modification Omega-N-methylarginine. Lysine 12 and lysine 25 each carry N6-acetyllysine. Phosphoserine is present on residues serine 50, serine 51, serine 53, and serine 57. A compositionally biased stretch (acidic residues) spans 65-74; it reads EEEEEELEET. Lysine 113 is covalently cross-linked (Glycyl lysine isopeptide (Lys-Gly) (interchain with G-Cter in SUMO2)). 7 WD repeats span residues 144-183, 197-236, 239-278, 281-320, 322-360, 374-413, and 419-460; these read GHQLSITCLVVTPDDSAIFSAAKDCSIIKWSVESGRKLHV, GHSSHVLCMAISSDGKYLASGDRSKLILIWEAQSCQHLYT, GHRDAVSGLAFRRGTHQLYSTSHDRSVKVWNVAENSYVET, GHQDAVAALDALSRECCVTAGGRDGTVRVWKIPEESQLVF, GHQGSIDCIHLINEEHMVSGADDGSVALWGLSKKRPLAL, EQPFWISSVAALLNTDLVATGSHSSCVRLWQCGEGFRQLD, and PLVG…NSVC.

Belongs to the WD repeat RRP9 family. In terms of assembly, interacts specifically with the U3 small nucleolar RNA (U3 snoRNA). Binds a sub-fragment of the U3 snoRNA surrounding the B/C motif (3UBC). This association with the U3BC RNA is dependent on the binding of a protein called 15.5K to the box B/C motif. The association of the protein with the U3BC RNA was found to be also dependent on a conserved RNA structure that flanks the box B/C motif. Part of the small subunit (SSU) processome, composed of more than 70 proteins and the RNA chaperone small nucleolar RNA (snoRNA) U3. Acetylation at Lys-12 and Lys-25 by KAT2B/PCAF under stress impairs pre-rRNA processing. Deacetylation by SIRT7 enhances RRP9-binding to U3 snoRNA, which is a prerequisite for pre-rRNA processing.

The protein localises to the nucleus. It is found in the nucleolus. Functionally, component of a nucleolar small nuclear ribonucleoprotein particle (snoRNP) thought to participate in the processing and modification of pre-ribosomal RNA (pre-rRNA). Part of the small subunit (SSU) processome, first precursor of the small eukaryotic ribosomal subunit. During the assembly of the SSU processome in the nucleolus, many ribosome biogenesis factors, an RNA chaperone and ribosomal proteins associate with the nascent pre-rRNA and work in concert to generate RNA folding, modifications, rearrangements and cleavage as well as targeted degradation of pre-ribosomal RNA by the RNA exosome. The polypeptide is U3 small nucleolar RNA-interacting protein 2 (Homo sapiens (Human)).